A 308-amino-acid chain; its full sequence is Probable GTP 3',8-cyclase (308 aa).

A Radical SAM core domain is found at 4 to 224 (RFGRPLEDLR…QIRKKHFRPR (221 aa)). Arg13 is a GTP binding site. Positions 20, 24, and 27 each coordinate [4Fe-4S] cluster. Lys60 is a binding site for GTP. Gly64 contacts S-adenosyl-L-methionine. Thr90 lines the GTP pocket. Ser114 provides a ligand contact to S-adenosyl-L-methionine. Lys151 lines the GTP pocket. 2 residues coordinate [4Fe-4S] cluster: Cys245 and Cys248. 250–252 (RIR) is a GTP binding site. Residue Cys262 participates in [4Fe-4S] cluster binding.

This sequence belongs to the radical SAM superfamily. MoaA family. Requires [4Fe-4S] cluster as cofactor.

It carries out the reaction GTP + AH2 + S-adenosyl-L-methionine = (8S)-3',8-cyclo-7,8-dihydroguanosine 5'-triphosphate + 5'-deoxyadenosine + L-methionine + A + H(+). It functions in the pathway cofactor biosynthesis; molybdopterin biosynthesis. Functionally, catalyzes the cyclization of GTP to (8S)-3',8-cyclo-7,8-dihydroguanosine 5'-triphosphate. In Saccharolobus islandicus (strain M.16.27) (Sulfolobus islandicus), this protein is Probable GTP 3',8-cyclase.